Reading from the N-terminus, the 769-residue chain is Serine/threonine-protein kinase PLK4 (769 aa).

The region spanning 14–267 (YEVQHLLGKG…LEAVLCHPFM (254 aa)) is the Protein kinase domain. Residues 20 to 28 (LGKGGFATV) and lysine 43 contribute to the ATP site. The active-site Proton acceptor is the aspartate 138. Residues 381–498 (EDRISVPPLN…ARFVGLVKSK (118 aa)) form the Cryptic POLO box 1 (CPB1) domain. One can recognise a Cryptic POLO box 2 (CPB2) domain in the interval 499–602 (TPKVTYFSTL…GRRPITDVQP (104 aa)). The 80-residue stretch at 660 to 739 (PIKRINVPDI…IPNIQLKLKT (80 aa)) folds into the POLO box domain.

The protein belongs to the protein kinase superfamily. Ser/Thr protein kinase family. CDC5/Polo subfamily. As to quaternary structure, homodimer. Post-translationally, ubiquitinated by the SCF(Slimb) ubiquitin ligase complex; leading to its degradation by the proteasome during interphase and regulating centriole number and ensuring the block to centriole reduplication.

Its subcellular location is the cytoplasm. It is found in the cytoskeleton. The protein resides in the microtubule organizing center. The protein localises to the centrosome. It localises to the centriole. It carries out the reaction L-seryl-[protein] + ATP = O-phospho-L-seryl-[protein] + ADP + H(+). The enzyme catalyses L-threonyl-[protein] + ATP = O-phospho-L-threonyl-[protein] + ADP + H(+). Serine/threonine-protein kinase that plays a central role in centriole duplication. Able to trigger procentriole formation on the surface of the mother centriole cylinder, using mother centriole as a platform, leading to the recruitment of centriole biogenesis proteins such as sas-6. When overexpressed, it is able to induce centrosome amplification through the simultaneous generation of multiple procentrioles adjoining each parental centriole during S phase. Centrosome amplification following overexpression can initiate tumorigenesis, highlighting the importance of centrosome regulation in cancers. This chain is Serine/threonine-protein kinase PLK4 (SAK), found in Drosophila sechellia (Fruit fly).